The following is a 402-amino-acid chain: Phosphoglycerate kinase (402 aa).

Residues 24–26 (DFN), Arg40, 63–66 (HFGR), Arg122, and Arg155 contribute to the substrate site. ATP contacts are provided by residues Lys206, Gly297, Glu328, and 358-361 (GGDS).

This sequence belongs to the phosphoglycerate kinase family. Monomer.

The protein localises to the cytoplasm. The catalysed reaction is (2R)-3-phosphoglycerate + ATP = (2R)-3-phospho-glyceroyl phosphate + ADP. It participates in carbohydrate degradation; glycolysis; pyruvate from D-glyceraldehyde 3-phosphate: step 2/5. The polypeptide is Phosphoglycerate kinase (Prochlorococcus marinus (strain MIT 9312)).